Reading from the N-terminus, the 244-residue chain is Futalosine hydrolase (244 aa).

This sequence belongs to the PNP/UDP phosphorylase family. Futalosine hydrolase subfamily.

The enzyme catalyses futalosine + H2O = dehypoxanthine futalosine + hypoxanthine. It functions in the pathway quinol/quinone metabolism; menaquinone biosynthesis. Catalyzes the hydrolysis of futalosine (FL) to dehypoxanthine futalosine (DHFL) and hypoxanthine, a step in the biosynthesis of menaquinone (MK, vitamin K2). Cannot directly use aminodeoxyfutalosine (AFL) as a substrate. The protein is Futalosine hydrolase of Acidothermus cellulolyticus (strain ATCC 43068 / DSM 8971 / 11B).